We begin with the raw amino-acid sequence, 234 residues long: 2,3,4,5-tetrahydropyridine-2,6-dicarboxylate N-acetyltransferase (234 aa).

This sequence belongs to the transferase hexapeptide repeat family. DapH subfamily.

It catalyses the reaction (S)-2,3,4,5-tetrahydrodipicolinate + acetyl-CoA + H2O = L-2-acetamido-6-oxoheptanedioate + CoA. Its pathway is amino-acid biosynthesis; L-lysine biosynthesis via DAP pathway; LL-2,6-diaminopimelate from (S)-tetrahydrodipicolinate (acetylase route): step 1/3. Catalyzes the transfer of an acetyl group from acetyl-CoA to tetrahydrodipicolinate. This Lacticaseibacillus casei (strain BL23) (Lactobacillus casei) protein is 2,3,4,5-tetrahydropyridine-2,6-dicarboxylate N-acetyltransferase.